Here is a 303-residue protein sequence, read N- to C-terminus: Target of rapamycin complex subunit LST8 (303 aa).

7 WD repeats span residues M1–T27, H30–V68, G73–N112, K114–Q153, E157–H196, A205–T244, and G248–Q287.

It belongs to the WD repeat LST8 family. The target of rapamycin complex 1 (TORC1) is composed of at least KOG1, LST8, TCO89 and either TOR1 (TORC1-A) or TOR2 (TORC1-B). TORC1 binds to and is inhibited by FKBP-rapamycin. Interacts with PIB2; following activation of PIB2 by glutamine or cysteine and as part of the TORC1 complex. The target of rapamycin complex 2 (TORC2) is composed of at least AVO1, AVO2, BIT61, LST8, TOR2 and TSC11. TORC2 forms a homodimer. Contrary to TORC1, TORC2 does not bind to and is not sensitive to FKBP-rapamycin. LST8 binds to the C-terminal kinase domain in TOR2.

Its subcellular location is the cell membrane. It localises to the vacuole membrane. Functionally, essential component of both TORC1 and TORC2. TORC1 regulates multiple cellular processes to control cell growth in response to environmental signals. Nutrient limitation and environmental stress signals cause inactivation of TORC1. Active TORC1 positively controls ribosome biogenesis via control of rRNA, ribosomal protein and tRNA gene expression, and rRNA processing. TORC1 positively controls protein biosynthesis by regulation of mRNA stability, translation initiation factor activity, and high-affinity amino acid permeases that serve to provide amino acids for use by the translation machinery. TORC1 also promotes growth by sequestering a number of nutrient and general stress-responsive transcription factors in the cytoplasm. TORC1 negatively controls macroautophagy, a process to recycle surplus cytoplasmic mass under nutrient starvation conditions. LST8 is involved in the negative regulation of transcription factors GLN3 and RTG1-RTG3, limiting the synthesis of alpha-ketoglutarate, glutamate and glutamine. LST8 is required for targeting of amino acid permeases (AAPs) to the plasma membrane. TORC2 regulates cell cycle-dependent polarization of the actin-cytoskeleton, cell wall integrity, and receptor endocytosis. TORC2 controls polarity of the actin cytoskeleton, which is required for orienting the secretory pathway toward discrete growth sites, via the RHO1/PKC1/MAPK cell integrity pathway. LST8 is involved in maintenance of cell wall integrity. LST8 modulates TOR2 kinase activity. The protein is Target of rapamycin complex subunit LST8 of Saccharomyces cerevisiae (strain ATCC 204508 / S288c) (Baker's yeast).